A 503-amino-acid chain; its full sequence is Glycerol kinase (503 aa).

ADP is bound at residue threonine 14. The ATP site is built by threonine 14, threonine 15, and serine 16. Residue threonine 14 coordinates sn-glycerol 3-phosphate. Position 18 (arginine 18) interacts with ADP. Sn-glycerol 3-phosphate is bound by residues arginine 84, glutamate 85, tyrosine 136, and aspartate 246. 5 residues coordinate glycerol: arginine 84, glutamate 85, tyrosine 136, aspartate 246, and glutamine 247. The ADP site is built by threonine 268 and glycine 311. 4 residues coordinate ATP: threonine 268, glycine 311, glutamine 315, and glycine 412. Residues glycine 412 and asparagine 416 each coordinate ADP.

The protein belongs to the FGGY kinase family.

The enzyme catalyses glycerol + ATP = sn-glycerol 3-phosphate + ADP + H(+). It functions in the pathway polyol metabolism; glycerol degradation via glycerol kinase pathway; sn-glycerol 3-phosphate from glycerol: step 1/1. Its activity is regulated as follows. Inhibited by fructose 1,6-bisphosphate (FBP). Key enzyme in the regulation of glycerol uptake and metabolism. Catalyzes the phosphorylation of glycerol to yield sn-glycerol 3-phosphate. This is Glycerol kinase from Haemophilus influenzae (strain 86-028NP).